Consider the following 272-residue polypeptide: Glutamate 5-kinase (272 aa).

Position 14 (Lys-14) interacts with ATP. Substrate-binding residues include Ser-54, Asp-141, and Asn-157. ATP is bound by residues 177 to 178 (SD) and 219 to 225 (TGGMLSK).

This sequence belongs to the glutamate 5-kinase family.

The protein resides in the cytoplasm. It catalyses the reaction L-glutamate + ATP = L-glutamyl 5-phosphate + ADP. The protein operates within amino-acid biosynthesis; L-proline biosynthesis; L-glutamate 5-semialdehyde from L-glutamate: step 1/2. Catalyzes the transfer of a phosphate group to glutamate to form L-glutamate 5-phosphate. In Streptococcus pyogenes serotype M28 (strain MGAS6180), this protein is Glutamate 5-kinase.